The primary structure comprises 402 residues: S-adenosylmethionine synthase (402 aa).

Residue His16 participates in ATP binding. Mg(2+) is bound at residue Asp18. Glu44 is a binding site for K(+). Residues Glu57 and Gln109 each contribute to the L-methionine site. Positions 109 to 119 (QSAHIAQGVDA) are flexible loop. ATP-binding positions include 174 to 176 (DTK), Asp252, 258 to 259 (RK), Ala275, and Lys279. L-methionine is bound at residue Asp252. Residue Lys283 coordinates L-methionine.

It belongs to the AdoMet synthase family. Homotetramer; dimer of dimers. Mg(2+) serves as cofactor. It depends on K(+) as a cofactor.

The protein resides in the cytoplasm. The catalysed reaction is L-methionine + ATP + H2O = S-adenosyl-L-methionine + phosphate + diphosphate. The protein operates within amino-acid biosynthesis; S-adenosyl-L-methionine biosynthesis; S-adenosyl-L-methionine from L-methionine: step 1/1. Catalyzes the formation of S-adenosylmethionine (AdoMet) from methionine and ATP. The overall synthetic reaction is composed of two sequential steps, AdoMet formation and the subsequent tripolyphosphate hydrolysis which occurs prior to release of AdoMet from the enzyme. In Rhizorhabdus wittichii (strain DSM 6014 / CCUG 31198 / JCM 15750 / NBRC 105917 / EY 4224 / RW1) (Sphingomonas wittichii), this protein is S-adenosylmethionine synthase.